A 126-amino-acid chain; its full sequence is Profilin-2 (126 aa).

Serine 2 carries the blocked amino end (Ser) modification. Lysine 104 carries the N6,N6,N6-trimethyllysine modification.

This sequence belongs to the profilin family. Occurs in many kinds of cells as a complex with monomeric actin in a 1:1 ratio.

It localises to the cytoplasm. The protein localises to the cytoskeleton. In terms of biological role, binds to actin and affects the structure of the cytoskeleton. At high concentrations, profilin prevents the polymerization of actin, whereas it enhances it at low concentrations. By binding to PIP2, it inhibits the formation of IP3 and DG. This chain is Profilin-2, found in Acanthamoeba castellanii (Amoeba).